An 862-amino-acid polypeptide reads, in one-letter code: MNSAEQTVTWLITLGVLESPKKTISDPEVFLQASLKDGVVLCRLLERLLPGTIEKVYPEPRNESECLSNIREFLRACGASLRLETFDANDLYQGQNFNKVLSSLVTLNKVTADIGLGSDSVCARPSSHRIKSFDSLGSQSSHSRTSKLLQSQYRSLDMTDNTNSQLVVRAKFNFQQTNEDELSFSKGDVIHVTRVEEGGWWEGTHNGRTGWFPSNYVREIKPSEKPVSPKSGTLKSPPKGFDTTAINKSYYNVVLQNILETEHEYSKELQSVLSTYLRPLQTSDKLSSANTSYLMGNLEEISSFQQVLVQSLEECTKSPEAQQRVGGCFLSLMPQMRTLYLAYCANHPSAVSVLTEHSEDLGEFMETKGASSPGILVLTTGLSKPFMRLDKYPTLLKELERHMEDYHPDRQDIQKSMTAFKNLSAQCQEVRKRKELELQILTEPIRSWEGDDIKTLGSVTYMSQVTIQCAGSEEKNERYLLLFPNLLLMLSASPRMSGFIYQGKLPTTGMTITKLEDSENHRNAFEISGSMIERILVSCTSQQDLHEWVEHLQKQTKVTSVSNPTIKPHSVPSHTLPSHPLTPSSKHADSKPVALTPAYHTLPHPSHHGTPHTTISWGPLEPPKTPKPWSLSCLRPAPPLRPSAALCYKEDLSKSPKTMKKLLPKRKPERKPSDEEFAVRKSTAALEEDAQILKVIEAYCTSAKTRQTLNSTWQGTDLMHNHVLADDDQSSLDSLGRRSSLSRLEPSDLSEDSEYDSIWTAHSYRMGSASRSRKESAPQVLLPEEEKIIVEETKSNGQTVIEEKSLVDTVYALKDEVQELRQDNKKMKKSLEEEQRARKDLEKLVRKVLKNMNDPAWDETNL.

The 112-residue stretch at 1 to 112 (MNSAEQTVTW…SLVTLNKVTA (112 aa)) folds into the Calponin-homology (CH) domain. A phosphoserine mark is found at Ser132, Ser155, Ser164, Ser228, and Ser236. Residues 163-222 (NSQLVVRAKFNFQQTNEDELSFSKGDVIHVTRVEEGGWWEGTHNGRTGWFPSNYVREIKP) enclose the SH3 domain. The 181-residue stretch at 250–430 (YYNVVLQNIL…KNLSAQCQEV (181 aa)) folds into the DH domain. The PH domain occupies 452-557 (DIKTLGSVTY…WVEHLQKQTK (106 aa)). Ser497 bears the Phosphoserine mark. Disordered stretches follow at residues 559–591 (TSVSNPTIKPHSVPSHTLPSHPLTPSSKHADSK), 657–679 (KTMKKLLPKRKPERKPSDEEFAV), and 728–748 (DQSSLDSLGRRSSLSRLEPSD). Over residues 572 to 585 (PSHTLPSHPLTPSS) the composition is skewed to polar residues. A compositionally biased stretch (basic residues) spans 657–669 (KTMKKLLPKRKPE). Residues 670–679 (RKPSDEEFAV) are compositionally biased toward basic and acidic residues. Residue Ser673 is modified to Phosphoserine. The segment covering 731-744 (SLDSLGRRSSLSRL) has biased composition (low complexity). Ser776 bears the Phosphoserine mark. A coiled-coil region spans residues 804–854 (KSLVDTVYALKDEVQELRQDNKKMKKSLEEEQRARKDLEKLVRKVLKNMND).

As to quaternary structure, interacts with PAK kinases through the SH3 domain. Interacts with unphosphorylated PAK1. Interacts with ITCH. Interacts with SCRIB; interaction is direct and may play a role in regulation of apoptosis. Interacts with GIT1 and TGFB1I1. Interacts with FRMPD4 (via N-terminus). Interacts with CaMK1. Interacts with BIN2. Interacts with PTK2/FAK1 and RAC1. Interacts with PARVB. Interacts with YWHAZ. Interacts (via PH domain) with NOX1 (via FAD-binding FR-type domain). Post-translationally, phosphorylated on Ser-673 by CaMK1; enhancement of GEF activity and downstream activation of RAC1. Phosphorylated by PTK2/FAK1; this promotes interaction with RAC1. Seems to be expressed in the central nervous system. Isoform B, isoform C and isoform E are expressed with highest levels in brain and testis.

It is found in the cell junction. Its subcellular location is the focal adhesion. The protein resides in the cell projection. It localises to the ruffle. The protein localises to the cytoplasm. It is found in the cell cortex. Its subcellular location is the lamellipodium. Acts as a RAC1 guanine nucleotide exchange factor (GEF) and can induce membrane ruffling. May function as a positive regulator of apoptosis. Functions in cell migration, attachment and cell spreading. Promotes targeting of RAC1 to focal adhesions. Downstream of NMDA receptors and CaMKK-CaMK1 signaling cascade, promotes the formation of spines and synapses in hippocampal neurons. This Mus musculus (Mouse) protein is Rho guanine nucleotide exchange factor 7 (Arhgef7).